We begin with the raw amino-acid sequence, 1078 residues long: Teashirt homolog 1-A (1078 aa).

3 disordered regions span residues 1–110 (MPRR…NVSY), 140–197 (KSNE…SNSA), and 271–300 (GHYR…MEME). Residues 26–36 (IEEDNLEDDGL) show a composition bias toward acidic residues. Over residues 57–71 (PSYQNSPISSATNQD) the composition is skewed to polar residues. Low complexity predominate over residues 143–197 (ENSSPTTNTNKSSMSEATGSTSDPDTPTTIPSSSCTNTSTSISVTTSNSTNSNSA). 2 consecutive C2H2-type zinc fingers follow at residues 248–272 (FKCK…ETGH) and 309–333 (LKCM…KTKH). Basic and acidic residues predominate over residues 271–286 (GHYRDDNKDRDAERTK). A disordered region spans residues 365–394 (DSPEQAGISPGASVSESAKDPKAANPYVTP). A C2H2-type 3 zinc finger spans residues 418-442 (LKCMECGSSHDSLQQLTAHMMVTGH). Disordered stretches follow at residues 472–524 (LPPT…ENED) and 850–877 (RLTP…EAMD). Over residues 497 to 524 (HSEEKKDPEKEKVNNCEVEKRIKEENED) the composition is skewed to basic and acidic residues. A compositionally biased stretch (polar residues) spans 853 to 862 (PKSSTPSTVS). Residues 885 to 955 (RKGRQSNWNP…NVKYQLRRTG (71 aa)) constitute a DNA-binding region (homeobox). 2 C2H2-type zinc fingers span residues 970–992 (FFCN…LETH) and 1038–1061 (FQCK…SKTH).

It belongs to the teashirt C2H2-type zinc-finger protein family.

It localises to the nucleus. Functionally, probable transcriptional regulator involved in developmental processes. May act as a transcriptional repressor (Potential). Involved in two major neuronal regionalization processes: primary anteroposterior (AP) axis patterning of the CNS and segmentation of the cranial neuronal crest (CNS) development. The chain is Teashirt homolog 1-A (tshz1-a) from Xenopus laevis (African clawed frog).